Consider the following 515-residue polypeptide: Putative acetolactate synthase large subunit IlvX (515 aa).

Glu48 is a thiamine diphosphate binding site. Residues 249 to 269 and 283 to 302 each bind FAD; these read FAEGAAAQLDGVKHLVLAGAR and DLVPAGCEVHVLAEPGGAAD. A thiamine pyrophosphate binding region spans residues 357-436; sequence TCGVLLPQAT…VTTVIYNNGA (80 aa). 2 residues coordinate Mg(2+): Asp407 and Asn434.

It belongs to the TPP enzyme family. In terms of assembly, heterodimer of large catalytic subunit and small regulatory subunit. Mg(2+) serves as cofactor. It depends on thiamine diphosphate as a cofactor.

It carries out the reaction 2 pyruvate + H(+) = (2S)-2-acetolactate + CO2. Its pathway is amino-acid biosynthesis; L-isoleucine biosynthesis; L-isoleucine from 2-oxobutanoate: step 1/4. It participates in amino-acid biosynthesis; L-valine biosynthesis; L-valine from pyruvate: step 1/4. Its function is as follows. Catalyzes the conversion of 2 pyruvate molecules into acetolactate in the first common step of the biosynthetic pathway of the branched-amino acids such as leucine, isoleucine, and valine. This Mycobacterium tuberculosis (strain ATCC 25618 / H37Rv) protein is Putative acetolactate synthase large subunit IlvX (ilvX).